Consider the following 267-residue polypeptide: Coiled-coil domain-containing protein 172 (267 aa).

Coiled-coil stretches lie at residues 24 to 97 (MREV…CEAI) and 128 to 191 (LMKE…EETE).

The protein belongs to the CCDC172 family. May interact with TEKT2.

It localises to the cytoplasm. The protein resides in the cell projection. The protein localises to the cilium. The polypeptide is Coiled-coil domain-containing protein 172 (Ccdc172) (Mus musculus (Mouse)).